Here is a 71-residue protein sequence, read N- to C-terminus: Large ribosomal subunit protein uL29 (71 aa).

Belongs to the universal ribosomal protein uL29 family.

In Halobacterium salinarum (strain ATCC 700922 / JCM 11081 / NRC-1) (Halobacterium halobium), this protein is Large ribosomal subunit protein uL29 (rpl29).